The following is a 98-amino-acid chain: Integration host factor subunit alpha (98 aa).

The segment at 49-71 (FGNFDLRDKNQRPGRNPKTGEDI) is disordered.

Belongs to the bacterial histone-like protein family. As to quaternary structure, heterodimer of an alpha and a beta chain.

Its function is as follows. This protein is one of the two subunits of integration host factor, a specific DNA-binding protein that functions in genetic recombination as well as in transcriptional and translational control. The protein is Integration host factor subunit alpha of Shewanella oneidensis (strain ATCC 700550 / JCM 31522 / CIP 106686 / LMG 19005 / NCIMB 14063 / MR-1).